The sequence spans 622 residues: Chaperone protein HscA homolog (622 aa).

Belongs to the heat shock protein 70 family.

Chaperone involved in the maturation of iron-sulfur cluster-containing proteins. Has a low intrinsic ATPase activity which is markedly stimulated by HscB. This Burkholderia pseudomallei (strain 668) protein is Chaperone protein HscA homolog.